A 417-amino-acid polypeptide reads, in one-letter code: Zinc-finger homeodomain protein 4 (417 aa).

Residues 1-12 (MVSILQLQTRTE) show a composition bias toward polar residues. 2 disordered regions span residues 1–22 (MVSI…ASAA) and 31–50 (RQQQ…FQER). Low complexity predominate over residues 13-22 (ASPASSASAA). Positions 36 to 46 (QEGEEEEEEFE) are enriched in acidic residues. The ZF-HD dimerization-type; degenerate zinc finger occupies 145–194 (YRECLKNHAAAIGGNATDGCGEFMPSGEEGSLEALKCSACGCHRNFHRKE). Disordered stretches follow at residues 281 to 309 (DEMD…FRTK) and 361 to 417 (NLAK…LKLE). Gly residues predominate over residues 286–298 (SGGGGGVGRGGGS). Residues 303–366 (KKRFRTKFTA…NNKHNLAKKP (64 aa)) constitute a DNA-binding region (homeobox). Over residues 368–417 (PSSPPPPPQIPPMSMPPSPPPPQIPPMSMPPSPPPMPMPMPPSPPQLKLE) the composition is skewed to pro residues.

As to quaternary structure, homo- and heterodimer with other ZFHD proteins.

The protein localises to the nucleus. In terms of biological role, putative transcription factor. In Oryza sativa subsp. japonica (Rice), this protein is Zinc-finger homeodomain protein 4 (ZHD4).